A 513-amino-acid polypeptide reads, in one-letter code: Light-independent protochlorophyllide reductase subunit B (513 aa).

D36 is a [4Fe-4S] cluster binding site. The Proton donor role is filled by D299. 434–435 (GM) is a substrate binding site.

Belongs to the ChlB/BchB/BchZ family. Protochlorophyllide reductase is composed of three subunits; ChlL, ChlN and ChlB. Forms a heterotetramer of two ChlB and two ChlN subunits. [4Fe-4S] cluster is required as a cofactor.

It localises to the plastid. It is found in the chloroplast. It carries out the reaction chlorophyllide a + oxidized 2[4Fe-4S]-[ferredoxin] + 2 ADP + 2 phosphate = protochlorophyllide a + reduced 2[4Fe-4S]-[ferredoxin] + 2 ATP + 2 H2O. It functions in the pathway porphyrin-containing compound metabolism; chlorophyll biosynthesis (light-independent). Its function is as follows. Component of the dark-operative protochlorophyllide reductase (DPOR) that uses Mg-ATP and reduced ferredoxin to reduce ring D of protochlorophyllide (Pchlide) to form chlorophyllide a (Chlide). This reaction is light-independent. The NB-protein (ChlN-ChlB) is the catalytic component of the complex. This Anthoceros angustus (Hornwort) protein is Light-independent protochlorophyllide reductase subunit B.